A 226-amino-acid chain; its full sequence is Cytidylate kinase (226 aa).

10-18 contacts ATP; it reads GPASSGKST.

Belongs to the cytidylate kinase family. Type 1 subfamily.

Its subcellular location is the cytoplasm. The catalysed reaction is CMP + ATP = CDP + ADP. It carries out the reaction dCMP + ATP = dCDP + ADP. The chain is Cytidylate kinase from Streptococcus thermophilus (strain CNRZ 1066).